Here is a 523-residue protein sequence, read N- to C-terminus: Calcium-dependent protein kinase 28 (523 aa).

Gly2 carries the N-myristoyl glycine lipid modification. Residue Cys4 is the site of S-palmitoyl cysteine attachment. The interval 15–43 is disordered; sequence SSRRSSQTKSKAAPTPIDTKASTKRRTGS. Residues 62 to 322 form the Protein kinase domain; the sequence is YTIGKLLGHG…AAQALSHAWV (261 aa). ATP is bound by residues 68 to 76 and Lys91; that span reads LGHGQFGYT. Asp188 acts as the Proton acceptor in catalysis. 2 positions are modified to phosphoserine: Ser228 and Ser318. The tract at residues 328–358 is autoinhibitory domain; it reads ATDIPVDISVLNNLRQFVRYSRLKQFALRAL. EF-hand domains follow at residues 365-400, 402-437, 444-479, and 482-509; these read AEIS…DLPW, LKDS…VHQL, KWQL…RGSI, and LLDE…ASIS. The Ca(2+) site is built by Asp378, Asp380, Asn382, Glu389, Asp415, Asn417, Asp419, Glu426, Asp457, Asp459, Asp461, Tyr463, Glu468, Asp487, Asp489, Asp491, and Lys493. Residue Ser495 is modified to Phosphoserine. Glu498 is a Ca(2+) binding site. Phosphoserine is present on Ser515.

Belongs to the protein kinase superfamily. Ser/Thr protein kinase family. CDPK subfamily. As to quaternary structure, interacts with BIK1. In terms of tissue distribution, expressed in vascular and meristematic tissues throughout plant development.

It localises to the cell membrane. The enzyme catalyses L-seryl-[protein] + ATP = O-phospho-L-seryl-[protein] + ADP + H(+). It carries out the reaction L-threonyl-[protein] + ATP = O-phospho-L-threonyl-[protein] + ADP + H(+). With respect to regulation, activated by calcium. Autophosphorylation plays an important role in the regulation of the kinase activity. In terms of biological role, may play a role in signal transduction pathways that involve calcium as a second messenger. Acts as a developmentally controlled regulator for coordinated stem elongation and vascular development. Acts as a key component which contributes to the developmental switch that establishes the transition from vegetative to reproductive growth. Involved in pathogen-associated molecular pattern (PAMP)-triggered immunity (PTI) signaling. Interacts with and phosphorylates the kinase BIK1, a central rate-limiting kinase in PTI signaling. Facilitates BIK1 turnover and negatively regulates BIK1-mediated immune responses triggered by several PAMPs. Its kinase activity is necessary and sufficient for its function in PTI signaling. This chain is Calcium-dependent protein kinase 28, found in Arabidopsis thaliana (Mouse-ear cress).